Here is a 252-residue protein sequence, read N- to C-terminus: Indole-3-glycerol phosphate synthase (252 aa).

The protein belongs to the TrpC family.

The enzyme catalyses 1-(2-carboxyphenylamino)-1-deoxy-D-ribulose 5-phosphate + H(+) = (1S,2R)-1-C-(indol-3-yl)glycerol 3-phosphate + CO2 + H2O. The protein operates within amino-acid biosynthesis; L-tryptophan biosynthesis; L-tryptophan from chorismate: step 4/5. The polypeptide is Indole-3-glycerol phosphate synthase (Leptospira interrogans serogroup Icterohaemorrhagiae serovar copenhageni (strain Fiocruz L1-130)).